We begin with the raw amino-acid sequence, 747 residues long: Sulfhydryl oxidase 1 (747 aa).

The first 29 residues, 1–29 (MRRCNSGSGPPPSLLLLLLWLLAVPGANA), serve as a signal peptide directing secretion. Residues 36–156 (YSPSDPLTLL…RERLIDALES (121 aa)) form the Thioredoxin domain. Catalysis depends on nucleophile residues C70 and C73. 2 cysteine pairs are disulfide-bonded: C70–C73 and C101–C110. N130 is a glycosylation site (N-linked (GlcNAc...) (complex) asparagine). N243 carries N-linked (GlcNAc...) asparagine glycosylation. A disulfide bond links C393 and C405. An ERV/ALR sulfhydryl oxidase domain is found at 396–503 (SEPHFRGFPC…EDPQFPKVQW (108 aa)). Residues R401, W408, and H412 each contribute to the FAD site. S426 carries the post-translational modification Phosphoserine; by FAM20C. C449 and C452 are disulfide-bonded. FAD contacts are provided by residues D451, H455, 478–485 (WSSHNRVN), K500, and W503. Cysteines 509 and 512 form a disulfide. The segment at 573-633 (SRNSTLDPGK…HMAELQRNEQ (61 aa)) is disordered. N-linked (GlcNAc...) asparagine glycosylation occurs at N575. Over residues 621–633 (PPEHMAELQRNEQ) the composition is skewed to basic and acidic residues. The helical transmembrane segment at 710 to 730 (ISLCVGLYSLSFMGLLAMYTY) threads the bilayer.

The protein belongs to the quiescin-sulfhydryl oxidase (QSOX) family. In terms of assembly, monomer. Requires FAD as cofactor. In terms of processing, N-glycosylated. O-glycosylated on Thr and Ser residues. In terms of tissue distribution, expressed in heart, placenta, lung, liver, skeletal muscle, pancreas and very weakly in brain and kidney.

Its subcellular location is the golgi apparatus membrane. The protein localises to the secreted. The enzyme catalyses 2 R'C(R)SH + O2 = R'C(R)S-S(R)CR' + H2O2. Functionally, catalyzes the oxidation of sulfhydryl groups in peptide and protein thiols to disulfides with the reduction of oxygen to hydrogen peroxide. Plays a role in disulfide bond formation in a variety of extracellular proteins. In fibroblasts, required for normal incorporation of laminin into the extracellular matrix, and thereby for normal cell-cell adhesion and cell migration. The polypeptide is Sulfhydryl oxidase 1 (QSOX1) (Homo sapiens (Human)).